An 886-amino-acid polypeptide reads, in one-letter code: Microsomal triacylglycerol transfer protein (886 aa).

Positions 1–27 (MENKNKKCLRTLLLLALFLGLLEDGKT) are cleaved as a signal peptide. The Vitellogenin domain occupies 30-653 (IAPNSQQIFK…SQASSFKLGI (624 aa)). Residues Asn358, Asn484, Asn502, and Asn616 are each glycosylated (N-linked (GlcNAc...) asparagine).

It is found in the endoplasmic reticulum. It localises to the golgi apparatus. It carries out the reaction a 1,2-diacyl-sn-glycero-3-phosphocholine(in) = a 1,2-diacyl-sn-glycero-3-phosphocholine(out). The catalysed reaction is a 1,2-diacyl-sn-glycero-3-phosphoethanolamine(in) = a 1,2-diacyl-sn-glycero-3-phosphoethanolamine(out). Catalyzes the transport of phospholipids such as phosphatidylethanolamine (1,2-diacyl-sn-glycero-3-phosphoethanolamine) and phosphatidylcholine (1,2-diacyl-sn-glycero-3-phosphocholine) between membranes. Required for the assembly and secretion of plasma lipoproteins that contain apolipoprotein B. The polypeptide is Microsomal triacylglycerol transfer protein (Drosophila melanogaster (Fruit fly)).